The following is a 307-amino-acid chain: Protease HtpX homolog (307 aa).

Helical transmembrane passes span 10–30 and 40–60; these read VITI…AYGL and ISII…QWLV. Position 144 (histidine 144) interacts with Zn(2+). Residue glutamate 145 is part of the active site. Zn(2+) is bound at residue histidine 148. The next 2 membrane-spanning stretches (helical) occupy residues 156–176 and 187–207; these read LLLA…SMIF and FFLV…MILG. Glutamate 213 lines the Zn(2+) pocket.

Belongs to the peptidase M48B family. Zn(2+) is required as a cofactor.

It localises to the cell membrane. The sequence is that of Protease HtpX homolog from Picrophilus torridus (strain ATCC 700027 / DSM 9790 / JCM 10055 / NBRC 100828 / KAW 2/3).